Here is a 182-residue protein sequence, read N- to C-terminus: FMN reductase (NADH) RutF (182 aa).

Belongs to the non-flavoprotein flavin reductase family. RutF subfamily.

The enzyme catalyses FMNH2 + NAD(+) = FMN + NADH + 2 H(+). Functionally, catalyzes the reduction of FMN to FMNH2 which is used to reduce pyrimidine by RutA via the Rut pathway. The protein is FMN reductase (NADH) RutF of Yersinia enterocolitica serotype O:8 / biotype 1B (strain NCTC 13174 / 8081).